Consider the following 515-residue polypeptide: uncharacterized protein (515 aa).

The interval 146 to 171 is disordered; it reads SSEVDRNSETEGTREENSNTSDWDEQ. A compositionally biased stretch (basic and acidic residues) spans 148-162; that stretch reads EVDRNSETEGTREEN.

Its subcellular location is the cytoplasm. It is found in the nucleus. This is an uncharacterized protein from Schizosaccharomyces pombe (strain 972 / ATCC 24843) (Fission yeast).